Consider the following 260-residue polypeptide: Indole-3-glycerol phosphate synthase (260 aa).

The protein belongs to the TrpC family.

The enzyme catalyses 1-(2-carboxyphenylamino)-1-deoxy-D-ribulose 5-phosphate + H(+) = (1S,2R)-1-C-(indol-3-yl)glycerol 3-phosphate + CO2 + H2O. It participates in amino-acid biosynthesis; L-tryptophan biosynthesis; L-tryptophan from chorismate: step 4/5. This Thermoanaerobacter sp. (strain X514) protein is Indole-3-glycerol phosphate synthase.